We begin with the raw amino-acid sequence, 377 residues long: Chaperone protein DnaJ (377 aa).

In terms of domain architecture, J spans 5–70 (DYYEILGVSR…QKRAAYDQYG (66 aa)). The CR-type zinc-finger motif lies at 132–210 (GVTKEIRIPT…CHGHGRIEKS (79 aa)). Positions 145, 148, 162, 165, 184, 187, 198, and 201 each coordinate Zn(2+). CXXCXGXG motif repeat units lie at residues 145–152 (CDVCHGSG), 162–169 (CPTCHGAG), 184–191 (CPHCHGRG), and 198–205 (CNKCHGHG).

The protein belongs to the DnaJ family. In terms of assembly, homodimer. It depends on Zn(2+) as a cofactor.

The protein localises to the cytoplasm. Its function is as follows. Participates actively in the response to hyperosmotic and heat shock by preventing the aggregation of stress-denatured proteins and by disaggregating proteins, also in an autonomous, DnaK-independent fashion. Unfolded proteins bind initially to DnaJ; upon interaction with the DnaJ-bound protein, DnaK hydrolyzes its bound ATP, resulting in the formation of a stable complex. GrpE releases ADP from DnaK; ATP binding to DnaK triggers the release of the substrate protein, thus completing the reaction cycle. Several rounds of ATP-dependent interactions between DnaJ, DnaK and GrpE are required for fully efficient folding. Also involved, together with DnaK and GrpE, in the DNA replication of plasmids through activation of initiation proteins. The polypeptide is Chaperone protein DnaJ (Edwardsiella ictaluri (strain 93-146)).